Here is a 147-residue protein sequence, read N- to C-terminus: 3-dehydroquinate dehydratase (147 aa).

Residue Tyr-24 is the Proton acceptor of the active site. The substrate site is built by Asn-75, His-81, and Asp-88. His-101 functions as the Proton donor in the catalytic mechanism. Substrate-binding positions include 102-103 (IS) and Arg-112.

It belongs to the type-II 3-dehydroquinase family. Homododecamer.

The catalysed reaction is 3-dehydroquinate = 3-dehydroshikimate + H2O. The protein operates within metabolic intermediate biosynthesis; chorismate biosynthesis; chorismate from D-erythrose 4-phosphate and phosphoenolpyruvate: step 3/7. Functionally, catalyzes a trans-dehydration via an enolate intermediate. The chain is 3-dehydroquinate dehydratase from Cereibacter sphaeroides (strain KD131 / KCTC 12085) (Rhodobacter sphaeroides).